A 368-amino-acid chain; its full sequence is 4-hydroxy-3-methylbut-2-en-1-yl diphosphate synthase (flavodoxin) (368 aa).

The [4Fe-4S] cluster site is built by Cys-268, Cys-271, Cys-303, and Glu-310.

It belongs to the IspG family. [4Fe-4S] cluster serves as cofactor.

It catalyses the reaction (2E)-4-hydroxy-3-methylbut-2-enyl diphosphate + oxidized [flavodoxin] + H2O + 2 H(+) = 2-C-methyl-D-erythritol 2,4-cyclic diphosphate + reduced [flavodoxin]. The protein operates within isoprenoid biosynthesis; isopentenyl diphosphate biosynthesis via DXP pathway; isopentenyl diphosphate from 1-deoxy-D-xylulose 5-phosphate: step 5/6. Functionally, converts 2C-methyl-D-erythritol 2,4-cyclodiphosphate (ME-2,4cPP) into 1-hydroxy-2-methyl-2-(E)-butenyl 4-diphosphate. This is 4-hydroxy-3-methylbut-2-en-1-yl diphosphate synthase (flavodoxin) from Bacillus cytotoxicus (strain DSM 22905 / CIP 110041 / 391-98 / NVH 391-98).